A 348-amino-acid chain; its full sequence is MHSFEISIPDSGLETALQNKIDRKTKPLGALGLLEKTAKKIGLVQQTLTPQLNNPQMLVFAGDHGAAKAGVSAYPQDVTWQMVENFLAGGAAINVFARQNGLGLSVVDAGVAHDFGQRTGLIDAKVAAGTANYIEQAAMTPAQCAQAIQNGAAIVRQLAAKGCNVVGFGEMGIGNTASASLLTHCLTGLPLAECVGRGTGLDDAGLARKQDLLEQALIRYRNAGGNNDAGAVLAEFGGFEIATMVGAMLAAAEAKMVLLIDGFIVGSAALIASRLAPALLDYCVFCHRSAEAGHRTQLLAMGAEPLLDLGLRLGEGTGAALAYPLVQSAVSFLNEMASFESAGVSDKE.

The Proton acceptor role is filled by Glu-315.

It belongs to the CobT family.

The catalysed reaction is 5,6-dimethylbenzimidazole + nicotinate beta-D-ribonucleotide = alpha-ribazole 5'-phosphate + nicotinate + H(+). It participates in nucleoside biosynthesis; alpha-ribazole biosynthesis; alpha-ribazole from 5,6-dimethylbenzimidazole: step 1/2. Its function is as follows. Catalyzes the synthesis of alpha-ribazole-5'-phosphate from nicotinate mononucleotide (NAMN) and 5,6-dimethylbenzimidazole (DMB). The protein is Nicotinate-nucleotide--dimethylbenzimidazole phosphoribosyltransferase of Dechloromonas aromatica (strain RCB).